We begin with the raw amino-acid sequence, 262 residues long: Urease accessory protein UreD (262 aa).

It belongs to the UreD family. In terms of assembly, ureD, UreF and UreG form a complex that acts as a GTP-hydrolysis-dependent molecular chaperone, activating the urease apoprotein by helping to assemble the nickel containing metallocenter of UreC. The UreE protein probably delivers the nickel.

Its subcellular location is the cytoplasm. Its function is as follows. Required for maturation of urease via the functional incorporation of the urease nickel metallocenter. In Acetivibrio thermocellus (strain ATCC 27405 / DSM 1237 / JCM 9322 / NBRC 103400 / NCIMB 10682 / NRRL B-4536 / VPI 7372) (Clostridium thermocellum), this protein is Urease accessory protein UreD.